The primary structure comprises 81 residues: CLAVATA3/ESR (CLE)-related protein 6 (81 aa).

Positions 1–26 (MANLILKQSLIILLIIYSTPILSSQA) are cleaved as a signal peptide. Residues Pro73 and Pro76 each carry the hydroxyproline modification. O-linked (Ara...) hydroxyproline glycosylation is present at Pro76.

It belongs to the CLV3/ESR signal peptide family. In terms of processing, the O-glycosylation (arabinosylation) of the hydroxyproline Pro-76 enhances binding affinity of the CLE6p peptide for its receptor. As to expression, mostly expressed in roots, seedlings, stems and flowers, and, to a lower extent, in apex and siliques.

Its subcellular location is the secreted. The protein resides in the extracellular space. In terms of biological role, extracellular signal peptide that regulates cell fate. The polypeptide is CLAVATA3/ESR (CLE)-related protein 6 (Arabidopsis thaliana (Mouse-ear cress)).